Reading from the N-terminus, the 601-residue chain is Potassium-transporting ATPase potassium-binding subunit (601 aa).

Helical transmembrane passes span 3–23 (ASAW…AWPL), 62–82 (HYAL…YALQ), 132–152 (LGLS…AFAL), 179–199 (AWVL…QGVI), 283–303 (LTNL…CFAF), 314–334 (VAIL…VTAA), 367–387 (FGIS…CGAV), 397–417 (LGGM…GGAG), 419–439 (GLYG…LMIG), 459–479 (VAIL…VLAP), 523–543 (VLLA…VLAI), and 564–584 (GPLF…LNYV).

The protein belongs to the KdpA family. In terms of assembly, the system is composed of three essential subunits: KdpA, KdpB and KdpC.

Its subcellular location is the cell inner membrane. Functionally, part of the high-affinity ATP-driven potassium transport (or Kdp) system, which catalyzes the hydrolysis of ATP coupled with the electrogenic transport of potassium into the cytoplasm. This subunit binds the periplasmic potassium ions and delivers the ions to the membrane domain of KdpB through an intramembrane tunnel. The chain is Potassium-transporting ATPase potassium-binding subunit from Paracidovorax citrulli (strain AAC00-1) (Acidovorax citrulli).